The sequence spans 270 residues: 4-hydroxy-tetrahydrodipicolinate reductase (270 aa).

NAD(+) contacts are provided by residues Gly11–Met16 and Glu37. Arg38 is an NADP(+) binding site. NAD(+) contacts are provided by residues Gly101 to Thr103 and Ala125 to Phe128. The active-site Proton donor/acceptor is the His158. His159 is a (S)-2,3,4,5-tetrahydrodipicolinate binding site. The active-site Proton donor is the Lys162. Gly168–Thr169 provides a ligand contact to (S)-2,3,4,5-tetrahydrodipicolinate.

This sequence belongs to the DapB family.

It is found in the cytoplasm. The catalysed reaction is (S)-2,3,4,5-tetrahydrodipicolinate + NAD(+) + H2O = (2S,4S)-4-hydroxy-2,3,4,5-tetrahydrodipicolinate + NADH + H(+). It catalyses the reaction (S)-2,3,4,5-tetrahydrodipicolinate + NADP(+) + H2O = (2S,4S)-4-hydroxy-2,3,4,5-tetrahydrodipicolinate + NADPH + H(+). Its pathway is amino-acid biosynthesis; L-lysine biosynthesis via DAP pathway; (S)-tetrahydrodipicolinate from L-aspartate: step 4/4. Catalyzes the conversion of 4-hydroxy-tetrahydrodipicolinate (HTPA) to tetrahydrodipicolinate. This chain is 4-hydroxy-tetrahydrodipicolinate reductase, found in Tolumonas auensis (strain DSM 9187 / NBRC 110442 / TA 4).